A 393-amino-acid polypeptide reads, in one-letter code: Isocitrate dehydrogenase [NAD] subunit gamma 1, mitochondrial (393 aa).

Residues 1–39 constitute a mitochondrion transit peptide; sequence MALKVAIAAGSAAKAIFKPALLCRPWEVLAAHEAPRRSI. Residue T120 coordinates citrate. Residue S130 is modified to Phosphoserine. N133 is a citrate binding site. Substrate-binding residues include R136 and R167. K206 is subject to N6-acetyllysine. An N6-succinyllysine modification is found at K226. D254 serves as a coordination point for substrate. D254 provides a ligand contact to Mn(2+). The ADP site is built by N312, T313, and N324.

Belongs to the isocitrate and isopropylmalate dehydrogenases family. Heterooligomer of subunits alpha (IDH3A), beta (IDH3B), and gamma (IDH3G) in the apparent ratio of 2:1:1. The heterodimer containing one IDH3A and one IDH3B subunit and the heterodimer containing one IDH3A and one IDH3G subunit assemble into a heterotetramer (which contains two subunits of IDH3A, one of IDH3B and one of IDH3G) and further into the heterooctamer. Mg(2+) is required as a cofactor. Requires Mn(2+) as cofactor.

It localises to the mitochondrion. With respect to regulation, the heterotetramer and the heterodimer composed of IDH3A and IDH3G subunits can be allosterically activated by citrate (CIT) or/and ADP, and the two activators can act independently or synergistically. The heterodimer composed of IDH3A and IDH3B subunits cannot be allosterically regulated and the allosteric regulation of the heterotetramer is through the IDH3G subunit and not the IDH3B subunit. The IDH3G subunit contains the allosteric site which consists of a CIT-binding site and an ADP-binding site, and the binding of CIT and ADP causes conformational changes at the allosteric site which are transmitted to the active site in the catalytic subunit (IDH3A) through a cascade of conformational changes at the heterodimer interface, leading to stabilization of the isocitrate-binding at the active site and thus activation of the enzyme. ATP can activate the heterotetramer and the heterodimer composed of IDH3A and IDH3G subunits at low concentrations but inhibits their activities at high concentrations, whereas ATP exhibits only inhibitory effect on the heterodimer composed of IDH3A and IDH3B subunits. In terms of biological role, regulatory subunit which plays a role in the allosteric regulation of the enzyme catalyzing the decarboxylation of isocitrate (ICT) into alpha-ketoglutarate. The heterodimer composed of the alpha (IDH3A) and beta (IDH3B) subunits and the heterodimer composed of the alpha (IDH3A) and gamma (IDH3G) subunits, have considerable basal activity but the full activity of the heterotetramer (containing two subunits of IDH3A, one of IDH3B and one of IDH3G) requires the assembly and cooperative function of both heterodimers. This is Isocitrate dehydrogenase [NAD] subunit gamma 1, mitochondrial (Idh3g) from Rattus norvegicus (Rat).